Consider the following 365-residue polypeptide: Flagellar P-ring protein (365 aa).

A signal peptide spans Met1–Ala19.

The protein belongs to the FlgI family. As to quaternary structure, the basal body constitutes a major portion of the flagellar organelle and consists of four rings (L,P,S, and M) mounted on a central rod.

The protein localises to the periplasm. It localises to the bacterial flagellum basal body. Functionally, assembles around the rod to form the L-ring and probably protects the motor/basal body from shearing forces during rotation. In Escherichia fergusonii (strain ATCC 35469 / DSM 13698 / CCUG 18766 / IAM 14443 / JCM 21226 / LMG 7866 / NBRC 102419 / NCTC 12128 / CDC 0568-73), this protein is Flagellar P-ring protein.